The following is a 334-amino-acid chain: Aspartate carbamoyltransferase catalytic subunit (334 aa).

The carbamoyl phosphate site is built by arginine 71 and threonine 72. An L-aspartate-binding site is contributed by lysine 99. 3 residues coordinate carbamoyl phosphate: arginine 121, histidine 151, and glutamine 154. Positions 184 and 239 each coordinate L-aspartate. Carbamoyl phosphate contacts are provided by glycine 280 and proline 281.

The protein belongs to the aspartate/ornithine carbamoyltransferase superfamily. ATCase family. Heterododecamer (2C3:3R2) of six catalytic PyrB chains organized as two trimers (C3), and six regulatory PyrI chains organized as three dimers (R2).

It catalyses the reaction carbamoyl phosphate + L-aspartate = N-carbamoyl-L-aspartate + phosphate + H(+). The protein operates within pyrimidine metabolism; UMP biosynthesis via de novo pathway; (S)-dihydroorotate from bicarbonate: step 2/3. Catalyzes the condensation of carbamoyl phosphate and aspartate to form carbamoyl aspartate and inorganic phosphate, the committed step in the de novo pyrimidine nucleotide biosynthesis pathway. In Pseudomonas fluorescens (strain SBW25), this protein is Aspartate carbamoyltransferase catalytic subunit.